Consider the following 255-residue polypeptide: MSQPLLAVNGLMMRFGGLLAVNNVSLELREREIVSLIGPNGAGKTTVFNCLTGFYKPTGGTITLRERHLEGLPGQQIARMGVVRTFQHVRLFREMTVIENLLVAQHQQLKTGLFSGLLKTPAFRRAQSEALDRAATWLERIGLLEHANRQASNLAYGDQRRLEIARCMVTQPEILMLDEPAAGLNPKETKELDELIAELRNHHNTTILLIEHDMKLVMGISDRIYVVNQGTPLANGTPEEIRNNPDVIRAYLGEA.

The ABC transporter domain occupies 6-254; sequence LAVNGLMMRF…PDVIRAYLGE (249 aa). An ATP-binding site is contributed by 38 to 45; the sequence is GPNGAGKT.

The protein belongs to the ABC transporter superfamily.

In terms of biological role, component of the high-affinity branched-chain amino acid transport system. In Salmonella typhi, this protein is High-affinity branched-chain amino acid transport ATP-binding protein LivG (livG).